The following is a 211-amino-acid chain: FMN-dependent NADH:quinone oxidoreductase (211 aa).

Residues 17 to 19 (SYS) and 99 to 102 (MWNF) each bind FMN.

This sequence belongs to the azoreductase type 1 family. As to quaternary structure, homodimer. FMN is required as a cofactor.

It carries out the reaction 2 a quinone + NADH + H(+) = 2 a 1,4-benzosemiquinone + NAD(+). The catalysed reaction is N,N-dimethyl-1,4-phenylenediamine + anthranilate + 2 NAD(+) = 2-(4-dimethylaminophenyl)diazenylbenzoate + 2 NADH + 2 H(+). Its function is as follows. Quinone reductase that provides resistance to thiol-specific stress caused by electrophilic quinones. Functionally, also exhibits azoreductase activity. Catalyzes the reductive cleavage of the azo bond in aromatic azo compounds to the corresponding amines. The protein is FMN-dependent NADH:quinone oxidoreductase of Exiguobacterium sp. (strain ATCC BAA-1283 / AT1b).